The primary structure comprises 250 residues: DNA repair protein RecO (250 aa).

Belongs to the RecO family.

Functionally, involved in DNA repair and RecF pathway recombination. The polypeptide is DNA repair protein RecO (Staphylococcus aureus (strain bovine RF122 / ET3-1)).